The primary structure comprises 931 residues: Mitochondrial cox1 translation regulator ppr4 (931 aa).

The N-terminal 16 residues, 1-16, are a transit peptide targeting the mitochondrion; that stretch reads MSKSFAYRHIWCFWRF. 7 PPR repeats span residues 247 to 277, 282 to 316, 429 to 461, 462 to 496, 497 to 531, 598 to 632, and 683 to 713; these read NEVLYTQYLGFLTKRGDYQIAIYMFDEMYRT, SFTACRLMIESLVRQNKFEEAISLYKKIIAKRPKI, HLLNCFLNSSTVSLDVSMVLELLRDLKKKKIKV, DERTLVICITIFSRRKDLFAMEKIHQYFSDQGIKT, SNQAYAALLDAYIEAEDTEKIELYLGKIRRLGITE, NVVHYSIAATVLGNLNQLDQLLLLEKRMESEGKAP, and PPSLFSSLIKEYTSLGDIKEAKQVLSTYLEY.

As to quaternary structure, component of the MRH5C complex, composed of mrh5, ppr4, mtf2, and sls1. Proteins mtf2 and sls1 form a subcomplex that serves as a scaffold to bring mrh5 and ppr4 together. The MRH5C complex associates with the small subunit of the mitochondrial ribosome.

The protein resides in the mitochondrion. In terms of biological role, RNA-binding translation activation factor that as part of the MRH5C complex specifically recruits cox1 mRNA to the mitochondrial ribosome for translation initiation. In Schizosaccharomyces pombe (strain 972 / ATCC 24843) (Fission yeast), this protein is Mitochondrial cox1 translation regulator ppr4.